The primary structure comprises 432 residues: Serine/threonine-protein kinase Sgk1 (432 aa).

The tract at residues 67–93 is disordered; it reads PELMNANPSPPPSPSQQINLGPSSNPH. Polar residues predominate over residues 82 to 92; that stretch reads QQINLGPSSNP. The Protein kinase domain occupies 99 to 356; it reads FHFLKVIGKG…FTEIKNHIFF (258 aa). Residues 105 to 113 and Lys128 each bind ATP; that span reads IGKGSFGKV. Residue Asp223 is the Proton acceptor of the active site. In terms of domain architecture, AGC-kinase C-terminal spans 357–432; it reads SPINWDDLIN…SYAPPVDSFL (76 aa).

Belongs to the protein kinase superfamily. AGC Ser/Thr protein kinase family.

The protein localises to the cytoplasm. It is found in the nucleus. The protein resides in the endoplasmic reticulum. The enzyme catalyses L-seryl-[protein] + ATP = O-phospho-L-seryl-[protein] + ADP + H(+). The catalysed reaction is L-threonyl-[protein] + ATP = O-phospho-L-threonyl-[protein] + ADP + H(+). Protein kinase that may play an important role in cellular stress response. May be involved in the regulation of processes such as cell survival, neuronal excitability and renal sodium excretion. This chain is Serine/threonine-protein kinase Sgk1 (SGK1), found in Gallus gallus (Chicken).